Reading from the N-terminus, the 325-residue chain is RNA ligase 1 (325 aa).

Requires Mg(2+) as cofactor. Mn(2+) is required as a cofactor. In terms of processing, AMPylates itself (auto-AMPylation).

The enzyme catalyses ATP + (ribonucleotide)n-3'-hydroxyl + 5'-phospho-(ribonucleotide)m = (ribonucleotide)n+m + AMP + diphosphate.. Functions as an RNA ligase, in vitro. The ligation reaction entails three nucleotidyl transfer steps. In the first step, the RNA ligase reacts with ATP in the absence of nucleic acid to form a covalent ligase-AMP intermediate and release pyrophosphate. In step 2, the ligase-AMP binds to the nucleic acid and transfers the adenylate to the 5'-PO4 terminus to form an adenylylated intermediate. In step 3, the RNA ligase directs the attack of the 3'-OH on the 5'-phosphoanhydride linkage, resulting in a repaired 3'-5' phosphodiester and release of AMP. Exhibits selectivity for single-stranded RNA substrates and may not have nick-sealing activity on double-stranded DNA-RNA hybrids. May play a role in maintaining RNA integrity under stress conditions, for example in response to reactive oxygen species (ROS). This is RNA ligase 1 from Pongo abelii (Sumatran orangutan).